The primary structure comprises 634 residues: Ras and EF-hand domain-containing protein homolog (634 aa).

EF-hand domains lie at 5–33 and 33–68; these read EVEN…CPQL and LDDN…TVQH. Ca(2+) contacts are provided by aspartate 46, aspartate 48, serine 50, lysine 52, and glutamate 57. The stretch at 169–310 forms a coiled coil; sequence LSEKKHENER…RCEFDQKQDE (142 aa). Positions 212–234 are disordered; it reads ARQEERDRLTKEKEEMRQRMSDE. Residues 449-454, 552-555, and 585-586 each bind GTP; these read AVGKSS, NKVD, and AL. A propeptide spans 632-634 (removed in mature form); that stretch reads RGS.

The protein belongs to the small GTPase superfamily. Rab family. In terms of assembly, homodimer.

It is found in the cytoplasm. Its subcellular location is the perinuclear region. In terms of biological role, binds GTP and GDP. Plays a role in uterine seam cell development. In Caenorhabditis elegans, this protein is Ras and EF-hand domain-containing protein homolog.